The primary structure comprises 92 residues: Putative membrane protein insertion efficiency factor (92 aa).

Belongs to the UPF0161 family.

The protein resides in the cell inner membrane. In terms of biological role, could be involved in insertion of integral membrane proteins into the membrane. The chain is Putative membrane protein insertion efficiency factor from Synechococcus sp. (strain CC9902).